Here is a 228-residue protein sequence, read N- to C-terminus: MGRLKKLKKIRIHREGTHILWGSFFLLLIINLALYWGIDCKIPFYLVALVSIVVYLLMVNFFRCPIRLFGQDTEKIVVAPADGKIVVIEEVDEHEYFHDRRIMVSIFMSILNVHANWYPVDGVVKKVTHDNGKFMKAWLPKASTENERSMIVIETPEGVEVMARQIAGAMARRIVTYAEPGEECYIDEHLGFIKFGSRVDVYLPLGTEICVSMGQLTTGNQTVIAKLK.

S197 functions as the Schiff-base intermediate with substrate; via pyruvic acid in the catalytic mechanism. Residue S197 is modified to Pyruvic acid (Ser); by autocatalysis.

Belongs to the phosphatidylserine decarboxylase family. PSD-A subfamily. As to quaternary structure, heterodimer of a large membrane-associated beta subunit and a small pyruvoyl-containing alpha subunit. Pyruvate serves as cofactor. Is synthesized initially as an inactive proenzyme. Formation of the active enzyme involves a self-maturation process in which the active site pyruvoyl group is generated from an internal serine residue via an autocatalytic post-translational modification. Two non-identical subunits are generated from the proenzyme in this reaction, and the pyruvate is formed at the N-terminus of the alpha chain, which is derived from the carboxyl end of the proenzyme. The post-translation cleavage follows an unusual pathway, termed non-hydrolytic serinolysis, in which the side chain hydroxyl group of the serine supplies its oxygen atom to form the C-terminus of the beta chain, while the remainder of the serine residue undergoes an oxidative deamination to produce ammonia and the pyruvoyl prosthetic group on the alpha chain.

Its subcellular location is the cell membrane. It carries out the reaction a 1,2-diacyl-sn-glycero-3-phospho-L-serine + H(+) = a 1,2-diacyl-sn-glycero-3-phosphoethanolamine + CO2. Its pathway is phospholipid metabolism; phosphatidylethanolamine biosynthesis; phosphatidylethanolamine from CDP-diacylglycerol: step 2/2. Catalyzes the formation of phosphatidylethanolamine (PtdEtn) from phosphatidylserine (PtdSer). This Bacteroides fragilis (strain ATCC 25285 / DSM 2151 / CCUG 4856 / JCM 11019 / LMG 10263 / NCTC 9343 / Onslow / VPI 2553 / EN-2) protein is Phosphatidylserine decarboxylase proenzyme.